We begin with the raw amino-acid sequence, 552 residues long: Serine/threonine-protein kinase RIO2 (552 aa).

The Protein kinase domain maps to 97 to 272 (VGNQMGVGKE…DRDVKCIKDF (176 aa)). Lys123 lines the ATP pocket. The Proton acceptor role is filled by Asp228. A phosphoserine mark is found at Ser332, Ser335, Ser337, Ser350, Ser362, Ser380, Ser382, Ser385, and Ser390. Residues 399–408 (ALEEIKGQVV) carry the Nuclear export signal motif. 3 positions are modified to phosphoserine: Ser412, Ser417, and Ser442. Residue Tyr445 is modified to Phosphotyrosine. Ser548 is subject to Phosphoserine.

Belongs to the protein kinase superfamily. RIO-type Ser/Thr kinase family. As to quaternary structure, associated with late 40S pre-ribosomal particles. Interacts with PLK1 (via its N-terminus). Mg(2+) is required as a cofactor. Post-translationally, autophosphorylated (in vitro). Phosphorylation at Ser-335, Ser-380, Ser-548 by PLK1 affects the timing of the metaphase-anaphase transition.

The protein localises to the cytoplasm. The catalysed reaction is L-seryl-[protein] + ATP = O-phospho-L-seryl-[protein] + ADP + H(+). It catalyses the reaction L-threonyl-[protein] + ATP = O-phospho-L-threonyl-[protein] + ADP + H(+). Functionally, serine/threonine-protein kinase involved in the final steps of cytoplasmic maturation of the 40S ribosomal subunit. Involved in export of the 40S pre-ribosome particles (pre-40S) from the nucleus to the cytoplasm. Its kinase activity is required for the release of NOB1, PNO1 and LTV1 from the late pre-40S and the processing of 18S-E pre-rRNA to the mature 18S rRNA. Regulates the timing of the metaphase-anaphase transition during mitotic progression, and its phosphorylation, most likely by PLK1, regulates this function. This Homo sapiens (Human) protein is Serine/threonine-protein kinase RIO2.